Here is a 759-residue protein sequence, read N- to C-terminus: 1,4-alpha-glucan branching enzyme GlgB (759 aa).

A disordered region spans residues 1–21 (MAKTKGLPKDTAVTPSPHLRP). Asp-422 (nucleophile) is an active-site residue. Glu-475 serves as the catalytic Proton donor.

This sequence belongs to the glycosyl hydrolase 13 family. GlgB subfamily. Monomer.

It carries out the reaction Transfers a segment of a (1-&gt;4)-alpha-D-glucan chain to a primary hydroxy group in a similar glucan chain.. The protein operates within glycan biosynthesis; glycogen biosynthesis. Functionally, catalyzes the formation of the alpha-1,6-glucosidic linkages in glycogen by scission of a 1,4-alpha-linked oligosaccharide from growing alpha-1,4-glucan chains and the subsequent attachment of the oligosaccharide to the alpha-1,6 position. The protein is 1,4-alpha-glucan branching enzyme GlgB of Mycobacterium sp. (strain JLS).